We begin with the raw amino-acid sequence, 248 residues long: 4-hydroxy-tetrahydrodipicolinate reductase (248 aa).

Residues aspartate 32, 74-76, and 99-102 each bind NAD(+); these read GTT and SANF. Histidine 134 (proton donor/acceptor) is an active-site residue. Histidine 135 lines the (S)-2,3,4,5-tetrahydrodipicolinate pocket. The active-site Proton donor is lysine 138. Residue 144–145 coordinates (S)-2,3,4,5-tetrahydrodipicolinate; that stretch reads GT.

The protein belongs to the DapB family.

The protein localises to the cytoplasm. It carries out the reaction (S)-2,3,4,5-tetrahydrodipicolinate + NAD(+) + H2O = (2S,4S)-4-hydroxy-2,3,4,5-tetrahydrodipicolinate + NADH + H(+). The enzyme catalyses (S)-2,3,4,5-tetrahydrodipicolinate + NADP(+) + H2O = (2S,4S)-4-hydroxy-2,3,4,5-tetrahydrodipicolinate + NADPH + H(+). It functions in the pathway amino-acid biosynthesis; L-lysine biosynthesis via DAP pathway; (S)-tetrahydrodipicolinate from L-aspartate: step 4/4. Catalyzes the conversion of 4-hydroxy-tetrahydrodipicolinate (HTPA) to tetrahydrodipicolinate. The protein is 4-hydroxy-tetrahydrodipicolinate reductase of Chlorobium limicola (strain DSM 245 / NBRC 103803 / 6330).